The following is a 228-amino-acid chain: MKISFHGQSCIKIITGDTTILVDPFISGNDKCDLKAEEQMPDFIVLSHGHDDHVGDTVEIAKNSGATVICNADLASFLAVEDGLENIAPMHIGGKRQFSFGQVKLTQAFHGSQTVRDGRIVNLGFPTGIVFTIEDKNIYFAGDTGLFSDMKLIGELNPLDVAFLPIGDNFTMGPEDAAIAARFLQAKLVVPMHYNTFPLIAQDPHKFVASLDEGITGKVLEIGEGIEI.

This sequence belongs to the UPF0173 family.

This is UPF0173 metal-dependent hydrolase LMOf2365_1599 from Listeria monocytogenes serotype 4b (strain F2365).